The sequence spans 876 residues: Leucine--tRNA ligase (876 aa).

The 'HIGH' region signature appears at 42 to 52 (PYPSGKLHMGH). Residues 634 to 638 (KMSKS) carry the 'KMSKS' region motif. Lys637 contacts ATP.

Belongs to the class-I aminoacyl-tRNA synthetase family.

It localises to the cytoplasm. The catalysed reaction is tRNA(Leu) + L-leucine + ATP = L-leucyl-tRNA(Leu) + AMP + diphosphate. The protein is Leucine--tRNA ligase of Neisseria meningitidis serogroup B (strain ATCC BAA-335 / MC58).